A 649-amino-acid polypeptide reads, in one-letter code: V-type ATP synthase subunit I (649 aa).

Transmembrane regions (helical) follow at residues 312–332 (FLSF…GLIF), 360–380 (FMIL…FFGV), 455–475 (DNIL…LGML), 485–505 (IGWV…LQAV), 520–540 (GQVG…GGII), 556–576 (VFSD…GAMV), and 593–613 (VLII…GGVI).

This sequence belongs to the V-ATPase 116 kDa subunit family.

The protein localises to the cell membrane. Produces ATP from ADP in the presence of a proton gradient across the membrane. This Chlamydia muridarum (strain MoPn / Nigg) protein is V-type ATP synthase subunit I (atpI).